The following is a 734-amino-acid chain: Photosystem I P700 chlorophyll a apoprotein A2 (734 aa).

The next 8 helical transmembrane spans lie at 46-69, 135-158, 175-199, 273-291, 330-353, 369-395, 417-439, and 517-535; these read IFAS…FHVA, LYTG…LHLQ, LNHH…HVAI, MAHH…GHMY, IHFQ…QHMY, AALY…IFFI, AIIS…LYVH, and FLVH…LILV. Cys-559 and Cys-568 together coordinate [4Fe-4S] cluster. 2 helical membrane passes run 575–596 and 643–665; these read AFYL…YWHW and LSVW…MFLI. The chlorophyll a site is built by His-654, Met-662, and Tyr-670. Trp-671 provides a ligand contact to phylloquinone. The helical transmembrane segment at 707–727 threads the bilayer; sequence LVGLAHFSVGYIFTYAAFLIA.

This sequence belongs to the PsaA/PsaB family. In terms of assembly, the PsaA/B heterodimer binds the P700 chlorophyll special pair and subsequent electron acceptors. PSI consists of a core antenna complex that captures photons, and an electron transfer chain that converts photonic excitation into a charge separation. The eukaryotic PSI reaction center is composed of at least 11 subunits. The cofactor is P700 is a chlorophyll a/chlorophyll a' dimer, A0 is one or more chlorophyll a, A1 is one or both phylloquinones and FX is a shared 4Fe-4S iron-sulfur center..

Its subcellular location is the plastid. The protein localises to the chloroplast thylakoid membrane. It catalyses the reaction reduced [plastocyanin] + hnu + oxidized [2Fe-2S]-[ferredoxin] = oxidized [plastocyanin] + reduced [2Fe-2S]-[ferredoxin]. In terms of biological role, psaA and PsaB bind P700, the primary electron donor of photosystem I (PSI), as well as the electron acceptors A0, A1 and FX. PSI is a plastocyanin-ferredoxin oxidoreductase, converting photonic excitation into a charge separation, which transfers an electron from the donor P700 chlorophyll pair to the spectroscopically characterized acceptors A0, A1, FX, FA and FB in turn. Oxidized P700 is reduced on the lumenal side of the thylakoid membrane by plastocyanin. The sequence is that of Photosystem I P700 chlorophyll a apoprotein A2 from Arabidopsis thaliana (Mouse-ear cress).